Reading from the N-terminus, the 800-residue chain is DNA topoisomerase 4 subunit A (800 aa).

Positions 31-495 constitute a Topo IIA-type catalytic domain; sequence LPDVRDGLKP…EIEEIKIDKE (465 aa). Tyr119 acts as the O-(5'-phospho-DNA)-tyrosine intermediate in catalysis.

Belongs to the type II topoisomerase GyrA/ParC subunit family. ParC type 2 subfamily. Heterotetramer composed of ParC and ParE.

The protein localises to the cell membrane. It catalyses the reaction ATP-dependent breakage, passage and rejoining of double-stranded DNA.. Its function is as follows. Topoisomerase IV is essential for chromosome segregation. It relaxes supercoiled DNA. Performs the decatenation events required during the replication of a circular DNA molecule. The polypeptide is DNA topoisomerase 4 subunit A (Staphylococcus aureus (strain N315)).